The chain runs to 224 residues: Ribosomal RNA large subunit methyltransferase E (224 aa).

Residues Gly60, Trp62, Asp93, Asp109, and Asp137 each coordinate S-adenosyl-L-methionine. Lys177 (proton acceptor) is an active-site residue.

Belongs to the class I-like SAM-binding methyltransferase superfamily. RNA methyltransferase RlmE family.

The protein localises to the cytoplasm. The catalysed reaction is uridine(2552) in 23S rRNA + S-adenosyl-L-methionine = 2'-O-methyluridine(2552) in 23S rRNA + S-adenosyl-L-homocysteine + H(+). Specifically methylates the uridine in position 2552 of 23S rRNA at the 2'-O position of the ribose in the fully assembled 50S ribosomal subunit. The protein is Ribosomal RNA large subunit methyltransferase E of Polynucleobacter asymbioticus (strain DSM 18221 / CIP 109841 / QLW-P1DMWA-1) (Polynucleobacter necessarius subsp. asymbioticus).